The following is a 237-amino-acid chain: Ribosomal RNA small subunit methyltransferase G (237 aa).

S-adenosyl-L-methionine contacts are provided by residues G78, F83, 129 to 130 (AE), and R148.

The protein belongs to the methyltransferase superfamily. RNA methyltransferase RsmG family.

The protein localises to the cytoplasm. Functionally, specifically methylates the N7 position of a guanine in 16S rRNA. The chain is Ribosomal RNA small subunit methyltransferase G from Streptococcus pyogenes serotype M4 (strain MGAS10750).